A 900-amino-acid chain; its full sequence is Translation initiation factor IF-2 (900 aa).

The segment covering 80–95 has biased composition (basic and acidic residues); it reads LEEQSRKTVEKEDQLR. Disordered regions lie at residues 80–106, 149–169, and 221–268; these read LEEQ…VPGR, AVEA…DSPV, and DEFD…VDEK. Positions 253–262 are enriched in basic residues; that stretch reads GKKKGKKKKK. A tr-type G domain is found at 397–567; it reads TRPPVVTIMG…LTEAEVRELK (171 aa). The interval 406 to 413 is G1; the sequence is GHVDHGKT. 406 to 413 contributes to the GTP binding site; that stretch reads GHVDHGKT. The G2 stretch occupies residues 431–435; the sequence is GITQH. The interval 453-456 is G3; it reads DTPG. GTP-binding positions include 453-457 and 507-510; these read DTPGH and NKID. Positions 507 to 510 are G4; it reads NKID. The tract at residues 543–545 is G5; that stretch reads SAK.

It belongs to the TRAFAC class translation factor GTPase superfamily. Classic translation factor GTPase family. IF-2 subfamily.

It localises to the cytoplasm. One of the essential components for the initiation of protein synthesis. Protects formylmethionyl-tRNA from spontaneous hydrolysis and promotes its binding to the 30S ribosomal subunits. Also involved in the hydrolysis of GTP during the formation of the 70S ribosomal complex. The protein is Translation initiation factor IF-2 of Chlorobium phaeovibrioides (strain DSM 265 / 1930) (Prosthecochloris vibrioformis (strain DSM 265)).